Here is an 84-residue protein sequence, read N- to C-terminus: Exodeoxyribonuclease 7 small subunit (84 aa).

It belongs to the XseB family. Heterooligomer composed of large and small subunits.

The protein localises to the cytoplasm. The enzyme catalyses Exonucleolytic cleavage in either 5'- to 3'- or 3'- to 5'-direction to yield nucleoside 5'-phosphates.. Bidirectionally degrades single-stranded DNA into large acid-insoluble oligonucleotides, which are then degraded further into small acid-soluble oligonucleotides. The protein is Exodeoxyribonuclease 7 small subunit of Caulobacter vibrioides (strain ATCC 19089 / CIP 103742 / CB 15) (Caulobacter crescentus).